We begin with the raw amino-acid sequence, 376 residues long: MARPKLHDFRRIVVKVGSSLLIDSGAGEVRATWLAALAADIAELHRDGRDVMIVSSGSIALGRSRLKLPRGALKLEESQAAAAVGQIALARTWSEVLGHHGIGAGQILVTLQDTEERRRYLNARSTIAKLLEWRAVPVINENDTVATNEIRYGDNDRLAARVATMASADLLILLSDIDGLYTAPPGSNPDAKLIPVVDSVTAEIEGMAGAAGSELSRGGMRTKIEAAKIATSAGTHMLIASGKIDHPLKAIAGGGPCTWFLTPANPVTARKRWIAGSLEPKGTLTIDAGAVTALRAGKSLLPAGVIRVDGQFARGDAVIVRGPDTHEIGRGLVAYDADDADRIKGRSSPDVMSILGVSGRAEMIHRDDLVVGTAPG.

K15 provides a ligand contact to ATP. The substrate site is built by S56, D143, and N155. Residue 175–176 (SD) coordinates ATP. The 78-residue stretch at 281 to 358 (KGTLTIDAGA…PDVMSILGVS (78 aa)) folds into the PUA domain.

It belongs to the glutamate 5-kinase family.

The protein localises to the cytoplasm. The catalysed reaction is L-glutamate + ATP = L-glutamyl 5-phosphate + ADP. It functions in the pathway amino-acid biosynthesis; L-proline biosynthesis; L-glutamate 5-semialdehyde from L-glutamate: step 1/2. In terms of biological role, catalyzes the transfer of a phosphate group to glutamate to form L-glutamate 5-phosphate. This is Glutamate 5-kinase from Rhodopseudomonas palustris (strain HaA2).